Consider the following 357-residue polypeptide: UDP-N-acetylglucosamine--N-acetylmuramyl-(pentapeptide) pyrophosphoryl-undecaprenol N-acetylglucosamine transferase (357 aa).

Residues 10–12 (TGG), asparagine 124, serine 189, isoleucine 244, and glutamine 289 each bind UDP-N-acetyl-alpha-D-glucosamine.

It belongs to the glycosyltransferase 28 family. MurG subfamily.

It is found in the cell membrane. The enzyme catalyses Mur2Ac(oyl-L-Ala-gamma-D-Glu-L-Lys-D-Ala-D-Ala)-di-trans,octa-cis-undecaprenyl diphosphate + UDP-N-acetyl-alpha-D-glucosamine = beta-D-GlcNAc-(1-&gt;4)-Mur2Ac(oyl-L-Ala-gamma-D-Glu-L-Lys-D-Ala-D-Ala)-di-trans,octa-cis-undecaprenyl diphosphate + UDP + H(+). The protein operates within cell wall biogenesis; peptidoglycan biosynthesis. In terms of biological role, cell wall formation. Catalyzes the transfer of a GlcNAc subunit on undecaprenyl-pyrophosphoryl-MurNAc-pentapeptide (lipid intermediate I) to form undecaprenyl-pyrophosphoryl-MurNAc-(pentapeptide)GlcNAc (lipid intermediate II). This is UDP-N-acetylglucosamine--N-acetylmuramyl-(pentapeptide) pyrophosphoryl-undecaprenol N-acetylglucosamine transferase from Lactococcus lactis subsp. lactis (strain IL1403) (Streptococcus lactis).